Reading from the N-terminus, the 252-residue chain is Imidazole glycerol phosphate synthase subunit HisF (252 aa).

Residues aspartate 11 and aspartate 130 contribute to the active site.

This sequence belongs to the HisA/HisF family. In terms of assembly, heterodimer of HisH and HisF.

Its subcellular location is the cytoplasm. The catalysed reaction is 5-[(5-phospho-1-deoxy-D-ribulos-1-ylimino)methylamino]-1-(5-phospho-beta-D-ribosyl)imidazole-4-carboxamide + L-glutamine = D-erythro-1-(imidazol-4-yl)glycerol 3-phosphate + 5-amino-1-(5-phospho-beta-D-ribosyl)imidazole-4-carboxamide + L-glutamate + H(+). Its pathway is amino-acid biosynthesis; L-histidine biosynthesis; L-histidine from 5-phospho-alpha-D-ribose 1-diphosphate: step 5/9. Functionally, IGPS catalyzes the conversion of PRFAR and glutamine to IGP, AICAR and glutamate. The HisF subunit catalyzes the cyclization activity that produces IGP and AICAR from PRFAR using the ammonia provided by the HisH subunit. The protein is Imidazole glycerol phosphate synthase subunit HisF of Aromatoleum aromaticum (strain DSM 19018 / LMG 30748 / EbN1) (Azoarcus sp. (strain EbN1)).